The chain runs to 268 residues: MQREEKQLEASLDALLNQVADLKNSLGSFIYKLENEYDRLTWPSVLDSFALLSGQLNTLNKVLKHEKTPLFRNQVIIPLVLSPDRDEDLMRQTEGRVPVFSHEVVPDHLRTKPDPEVEEQEKQLTTDAARIGADAAQKQIQSLNKMCSNLLEKISKEERESESGGLRPNKQTFNPGDTNALVAAVAFGKGLSNWRPSGSSGPGQPGQPGAGTILAGASGLPQVQMPGAPNQQQPMLSGVQMAQAGQPGKMPSGIKTNIKSASMHPYQR.

Positions 1 to 29 (MQREEKQLEASLDALLNQVADLKNSLGSF) form a coiled coil. A Phosphoserine modification is found at Ser82. Residues 133–163 (ADAAQKQIQSLNKMCSNLLEKISKEERESES) adopt a coiled-coil conformation. Positions 142 to 151 (SLNKMCSNLL) are interaction with the Elongin BC complex. Disordered stretches follow at residues 156–176 (KEERESESGGLRPNKQTFNPG) and 193–268 (NWRP…PYQR). Gly residues predominate over residues 200–209 (SGPGQPGQPG).

Belongs to the Mediator complex subunit 8 family. Component of the Mediator complex, which is composed of MED1, MED4, MED6, MED7, MED8, MED9, MED10, MED11, MED12, MED13, MED13L, MED14, MED15, MED16, MED17, MED18, MED19, MED20, MED21, MED22, MED23, MED24, MED25, MED26, MED27, MED29, MED30, MED31, CCNC, CDK8 and CDC2L6/CDK11. The MED12, MED13, CCNC and CDK8 subunits form a distinct module termed the CDK8 module. Mediator containing the CDK8 module is less active than Mediator lacking this module in supporting transcriptional activation. Individual preparations of the Mediator complex lacking one or more distinct subunits have been variously termed ARC, CRSP, DRIP, PC2, SMCC and TRAP. May be part of a multisubunit E3 ubiquitin-protein ligase complex with the Elongin BC complex (ELOB and ELOC), CUL2 and RBX1.

The protein localises to the nucleus. Its pathway is protein modification; protein ubiquitination. Component of the Mediator complex, a coactivator involved in the regulated transcription of nearly all RNA polymerase II-dependent genes. Mediator functions as a bridge to convey information from gene-specific regulatory proteins to the basal RNA polymerase II transcription machinery. Mediator is recruited to promoters by direct interactions with regulatory proteins and serves as a scaffold for the assembly of a functional preinitiation complex with RNA polymerase II and the general transcription factors. May play a role as a target recruitment subunit in E3 ubiquitin-protein ligase complexes and thus in ubiquitination and subsequent proteasomal degradation of target proteins. The sequence is that of Mediator of RNA polymerase II transcription subunit 8 (Med8) from Mus musculus (Mouse).